A 486-amino-acid chain; its full sequence is Stretch-activated cation channel yam8 (486 aa).

A signal peptide spans 1–24; it reads MFFFSTHLILKILFFWSITRNIFG. Topologically, residues 25 to 464 are extracellular; that stretch reads ATYTSLLLNN…PGVEFYESGS (440 aa). N-linked (GlcNAc...) asparagine glycans are attached at residues N33, N49, N59, N82, and N93. A helical membrane pass occupies residues 465 to 485; the sequence is ALLNISWRTFFISLIFWILFV. E486 is a topological domain (cytoplasmic).

It localises to the cell membrane. In terms of biological role, calcium-permeable, cation-selective stretch-activated channel (SAC) that functions together with CCH1 to mediate calcium entry into cells. Required during mating. This is Stretch-activated cation channel yam8 from Schizosaccharomyces pombe (strain 972 / ATCC 24843) (Fission yeast).